A 585-amino-acid polypeptide reads, in one-letter code: Potassium-transporting ATPase potassium-binding subunit (585 aa).

The next 12 helical transmembrane spans lie at isoleucine 25–isoleucine 45, tyrosine 84–methionine 104, phenylalanine 152–phenylalanine 172, isoleucine 194–valine 214, leucine 275–phenylalanine 295, valine 307–valine 327, alanine 345–alanine 365, glycine 368–asparagine 388, glycine 397–glycine 417, leucine 437–proline 457, leucine 502–alanine 522, and leucine 547–leucine 567.

The protein belongs to the KdpA family. The system is composed of three essential subunits: KdpA, KdpB and KdpC.

Its subcellular location is the cell membrane. Its function is as follows. Part of the high-affinity ATP-driven potassium transport (or Kdp) system, which catalyzes the hydrolysis of ATP coupled with the electrogenic transport of potassium into the cytoplasm. This subunit binds the extracellular potassium ions and delivers the ions to the membrane domain of KdpB through an intramembrane tunnel. In Thermoplasma volcanium (strain ATCC 51530 / DSM 4299 / JCM 9571 / NBRC 15438 / GSS1), this protein is Potassium-transporting ATPase potassium-binding subunit.